The primary structure comprises 47 residues: Large ribosomal subunit protein bL33 (47 aa).

This sequence belongs to the bacterial ribosomal protein bL33 family.

The sequence is that of Large ribosomal subunit protein bL33 from Staphylococcus xylosus.